Consider the following 193-residue polypeptide: Potassium-transporting ATPase KdpC subunit (193 aa).

Residues 14 to 34 (ITFTFLVLCGLVYPLIVTGIA) traverse the membrane as a helical segment.

Belongs to the KdpC family. The system is composed of three essential subunits: KdpA, KdpB and KdpC.

The protein localises to the cell membrane. Its function is as follows. Part of the high-affinity ATP-driven potassium transport (or Kdp) system, which catalyzes the hydrolysis of ATP coupled with the electrogenic transport of potassium into the cytoplasm. This subunit acts as a catalytic chaperone that increases the ATP-binding affinity of the ATP-hydrolyzing subunit KdpB by the formation of a transient KdpB/KdpC/ATP ternary complex. This is Potassium-transporting ATPase KdpC subunit from Bacillus thuringiensis subsp. konkukian (strain 97-27).